Reading from the N-terminus, the 125-residue chain is Small ribosomal subunit protein eS8 (125 aa).

Residues 1–36 (MKDQGRSTRKRTGGRLHDVSKKKRHQLGREPAETTV) form a disordered region. Residues 7 to 26 (STRKRTGGRLHDVSKKKRHQ) are compositionally biased toward basic residues. Residues 27–36 (LGREPAETTV) show a composition bias toward basic and acidic residues.

This sequence belongs to the eukaryotic ribosomal protein eS8 family. Part of the 30S ribosomal subunit.

The chain is Small ribosomal subunit protein eS8 from Haloquadratum walsbyi (strain DSM 16790 / HBSQ001).